Reading from the N-terminus, the 205-residue chain is MANTLYDRTIAFAGMCQAVALVQQIARNGHCDQDAFETSIKAILNTNPANTLDVFGNESQLKLGLECLVKGIDSTPTGSEVTRYLISLMALERKLMGRNDAMSQLGDRIQMVQRQTEHYDLFEEQMISNVASIYLDVISPIGPRIQVTGTPTVLQQTSNQHKVRALLLSGIRSAVLWRQVGGRRRHLIFGRKKMVEQAQILLARM.

The protein belongs to the HflD family.

It localises to the cytoplasm. The protein localises to the cell inner membrane. The sequence is that of High frequency lysogenization protein HflD homolog from Vibrio vulnificus (strain CMCP6).